The following is a 1018-amino-acid chain: Pleckstrin homology domain-containing family M member 2 (1018 aa).

The residue at position 1 (methionine 1) is an N-acetylmethionine. Positions 1-289 (MEPREVKDRI…PDQPDACTEL (289 aa)) are interaction with KIF5B. Residues 36 to 158 (RNHDKVLQRL…IRFDLDLDAP (123 aa)) enclose the RUN domain. Disordered stretches follow at residues 210–367 (SAIA…SSEL), 407–440 (TWCSHADPPEQSFRAGSPGEAPEKPPFCDFSEGL), 452–520 (ESPS…DSQL), 526–545 (EPLVSQEPVPEPVSQPEPGT), and 555–583 (DQPSPCLSSAEDSGVEEGQGSPSEMTHPS). The span at 230-245 (STASDLTSSKTSTKSP) shows a compositional bias: low complexity. Positions 258 to 270 (ETASSDTTPVHTT) are enriched in polar residues. Over residues 294 to 306 (VTKKKKIGKKKKT) the composition is skewed to basic residues. Polar residues-rich tracts occupy residues 316 to 325 (HPTSSQQKCG) and 347 to 367 (VLASPQEQGEGLSSTAGSSEL). Serine 423 bears the Phosphoserine mark. The PH domain occupies 770–872 (TITKEGMLHY…WMQHLCQAVS (103 aa)).

As to quaternary structure, interacts with KLC2 (via TPR repeats). Interacts with KIF5B. Interacts with BORCS5. Interacts (via RUN domain) with ARL8B (GTP-bound form); PLEKHM1 and PLEKHM2 compete for interaction with ARL8B. Interacts with ARL8A.

Its subcellular location is the cytoplasm. The protein resides in the lysosome membrane. In terms of biological role, plays a role in lysosomes movement and localization at the cell periphery acting as an effector of ARL8B. Required for ARL8B to exert its effects on lysosome location, recruits kinesin-1 to lysosomes and hence direct their movement toward microtubule plus ends. Binding to ARL8B provides a link from lysosomal membranes to plus-end-directed motility. Critical factor involved in NK cell-mediated cytotoxicity. Drives the polarization of cytolytic granules and microtubule-organizing centers (MTOCs) toward the immune synapse between effector NK lymphocytes and target cells. Required for maintenance of the Golgi apparatus organization. May play a role in membrane tubulation. The sequence is that of Pleckstrin homology domain-containing family M member 2 from Mus musculus (Mouse).